A 71-amino-acid polypeptide reads, in one-letter code: Large ribosomal subunit protein uL29 (71 aa).

This sequence belongs to the universal ribosomal protein uL29 family.

In Halobacterium salinarum (strain ATCC 700922 / JCM 11081 / NRC-1) (Halobacterium halobium), this protein is Large ribosomal subunit protein uL29 (rpl29).